The following is a 369-amino-acid chain: Peptidyl-prolyl cis-trans isomerase D (369 aa).

The PPIase cyclophilin-type domain maps to 8-173 (YFDLSIGGKP…ADVRIDACGI (166 aa)). TPR repeat units follow at residues 218–251 (VEAVKAIGTAQLQAARFDVAVQKYAKAAGFLQEY), 269–302 (VAVHLNLALAALKAGNHQRVLSAASEVLHGAADD), and 306–339 (AKALYRRGLAYHHLKDPEMALTDLELAATYQPGD).

It belongs to the cyclophilin-type PPIase family. PPIase D subfamily.

Its subcellular location is the cytoplasm. The catalysed reaction is [protein]-peptidylproline (omega=180) = [protein]-peptidylproline (omega=0). Functionally, PPIases accelerate the folding of proteins. It catalyzes the cis-trans isomerization of proline imidic peptide bonds in oligopeptides. The protein is Peptidyl-prolyl cis-trans isomerase D (CPR6) of Eremothecium gossypii (strain ATCC 10895 / CBS 109.51 / FGSC 9923 / NRRL Y-1056) (Yeast).